Reading from the N-terminus, the 373-residue chain is Chorismate synthase (373 aa).

Arg46 is a binding site for NADP(+). FMN contacts are provided by residues 123 to 125, 250 to 251, Gly295, 310 to 314, and Arg337; these read RSS, NA, and KPTPS.

This sequence belongs to the chorismate synthase family. The cofactor is FMNH2.

It carries out the reaction 5-O-(1-carboxyvinyl)-3-phosphoshikimate = chorismate + phosphate. It functions in the pathway metabolic intermediate biosynthesis; chorismate biosynthesis; chorismate from D-erythrose 4-phosphate and phosphoenolpyruvate: step 7/7. Catalyzes the anti-1,4-elimination of the C-3 phosphate and the C-6 proR hydrogen from 5-enolpyruvylshikimate-3-phosphate (EPSP) to yield chorismate, which is the branch point compound that serves as the starting substrate for the three terminal pathways of aromatic amino acid biosynthesis. This reaction introduces a second double bond into the aromatic ring system. This Methanococcus aeolicus (strain ATCC BAA-1280 / DSM 17508 / OCM 812 / Nankai-3) protein is Chorismate synthase.